A 385-amino-acid chain; its full sequence is GTPase Obg (385 aa).

In terms of domain architecture, Obg spans 1-159 (MKFVDEVEIR…RNLKLELLLL (159 aa)). The OBG-type G domain maps to 160–333 (ADVGLLGLPN…LIHDVMTLLE (174 aa)). GTP-binding positions include 166–173 (GLPNAGKS), 191–195 (FTTLI), 213–216 (DIPG), 283–286 (NKID), and 314–316 (SAI). Mg(2+) is bound by residues Ser173 and Thr193.

Belongs to the TRAFAC class OBG-HflX-like GTPase superfamily. OBG GTPase family. Monomer. Mg(2+) is required as a cofactor.

It localises to the cytoplasm. In terms of biological role, an essential GTPase which binds GTP, GDP and possibly (p)ppGpp with moderate affinity, with high nucleotide exchange rates and a fairly low GTP hydrolysis rate. Plays a role in control of the cell cycle, stress response, ribosome biogenesis and in those bacteria that undergo differentiation, in morphogenesis control. The chain is GTPase Obg from Pseudoalteromonas translucida (strain TAC 125).